The following is a 957-amino-acid chain: Glycine dehydrogenase (decarboxylating) (957 aa).

Position 708 is an N6-(pyridoxal phosphate)lysine (lysine 708).

The protein belongs to the GcvP family. As to quaternary structure, the glycine cleavage system is composed of four proteins: P, T, L and H. Pyridoxal 5'-phosphate serves as cofactor.

The catalysed reaction is N(6)-[(R)-lipoyl]-L-lysyl-[glycine-cleavage complex H protein] + glycine + H(+) = N(6)-[(R)-S(8)-aminomethyldihydrolipoyl]-L-lysyl-[glycine-cleavage complex H protein] + CO2. Functionally, the glycine cleavage system catalyzes the degradation of glycine. The P protein binds the alpha-amino group of glycine through its pyridoxal phosphate cofactor; CO(2) is released and the remaining methylamine moiety is then transferred to the lipoamide cofactor of the H protein. The chain is Glycine dehydrogenase (decarboxylating) from Salmonella newport (strain SL254).